We begin with the raw amino-acid sequence, 258 residues long: 4-hydroxy-2-oxovalerate aldolase (258 aa).

Catalysis depends on His-48, which acts as the Proton acceptor. Gln-149 contacts substrate. Glu-151 serves as a coordination point for Mg(2+). 2 residues coordinate substrate: Ala-176 and Asp-177. Mg(2+) is bound at residue Asp-177.

This sequence belongs to the HpcH/HpaI aldolase family.

The catalysed reaction is (S)-4-hydroxy-2-oxopentanoate = acetaldehyde + pyruvate. It functions in the pathway xenobiotic degradation; biphenyl degradation. Catalyzes the reversible retro-aldol cleavage of 4-hydroxy-2-oxovalerate to pyruvate and acetaldehyde. This chain is 4-hydroxy-2-oxovalerate aldolase (bphF), found in Rhodococcus jostii (strain RHA1).